The chain runs to 282 residues: Bifunctional protein FolD (282 aa).

Residues 163-165 (NRS), T188, and I229 each bind NADP(+).

Belongs to the tetrahydrofolate dehydrogenase/cyclohydrolase family. Homodimer.

The enzyme catalyses (6R)-5,10-methylene-5,6,7,8-tetrahydrofolate + NADP(+) = (6R)-5,10-methenyltetrahydrofolate + NADPH. It catalyses the reaction (6R)-5,10-methenyltetrahydrofolate + H2O = (6R)-10-formyltetrahydrofolate + H(+). It functions in the pathway one-carbon metabolism; tetrahydrofolate interconversion. Catalyzes the oxidation of 5,10-methylenetetrahydrofolate to 5,10-methenyltetrahydrofolate and then the hydrolysis of 5,10-methenyltetrahydrofolate to 10-formyltetrahydrofolate. This is Bifunctional protein FolD from Malacoplasma penetrans (strain HF-2) (Mycoplasma penetrans).